We begin with the raw amino-acid sequence, 348 residues long: MKKTAIAIAVALAGFATVAQAAPKDNTWYTGAKLGWSQYHDTGFIPNNGPTHENQLGAGAFGGYQVNPYVGFEMGYDWLGRMPYKGDNINGAYKAQGVQLTAKLGYPITDDLDIYTRLGGMVWRADTKANVPGGASFKDHDTGVSPVFAGGVEYAITPEIATRLEYQWTNNIGDANTIGTRPDNGLLSLGVSYRFGQGEAAPVVAPAPAPEVQTKHFTLKSDVLFNFNKATLKPEGQAALDQLYSQLSNLDPKDGSVVVLGYTDRIGSDAYNQGLSERRAQSVVDYLISKGIPADKISARGMGESNPVTGNTCDNVKQRAALIDCLAPDRRVEIEVKGIKDVVTQPQA.

An N-terminal signal peptide occupies residues 1–21; sequence MKKTAIAIAVALAGFATVAQA. Beta stranded transmembrane passes span 27–37, 55–66, 70–78, 96–107, 112–120, 146–155, 160–167, and 186–194; these read TWYTGAKLGWS, QLGAGAFGGYQV, VGFEMGYDW, QGVQLTAKLGYP, LDIYTRLGG, PVFAGGVEYA, IATRLEYQ, and LLSLGVSYR. The segment at 201-210 is hinge-like; it reads APVVAPAPAP. Tandem repeats lie at residues 205-206, 207-208, and 209-210. Residues 205–210 form a 3 X 2 AA tandem repeats of A-P region; it reads APAPAP. One can recognise an OmpA-like domain in the interval 212 to 340; the sequence is VQTKHFTLKS…RVEIEVKGIK (129 aa). Cys313 and Cys325 are joined by a disulfide.

Belongs to the outer membrane OOP (TC 1.B.6) superfamily. OmpA family. As to quaternary structure, monomer and homodimer. (Microbial infection) Upon infection with phage Sf6 associates with the mature bacteriophage capsid. Was originally suggested to be within the bacteriophage capsid. This has been disproven.

The protein resides in the extracellular vesicle. Its subcellular location is the cell outer membrane. Its function is as follows. With TolR probably plays a role in maintaining the position of the peptidoglycan cell wall in the periplasm. Acts as a porin with low permeability that allows slow penetration of small solutes; an internal gate slows down solute passage. In terms of biological role, required for conjugation with F-type plasmids; probably serves as the mating receptor on recipient cells. (Microbial infection) Serves as a secondary receptor during phage Sf6 infection; infection requires both lipopolysaccharide (LPS) and the OmpA beta-barrel. The polypeptide is Outer membrane protein A (Shigella flexneri).